Reading from the N-terminus, the 284-residue chain is Shikimate dehydrogenase (NADP(+)) (284 aa).

Residues 20–22 (SIS) and serine 67 each bind shikimate. The active-site Proton acceptor is the lysine 71. Residues asparagine 92 and aspartate 107 each contribute to the shikimate site. Residues 129–133 (GAGGA) and valine 227 each bind NADP(+). Residue tyrosine 229 participates in shikimate binding. Glycine 250 contributes to the NADP(+) binding site.

Belongs to the shikimate dehydrogenase family. Homodimer.

The enzyme catalyses shikimate + NADP(+) = 3-dehydroshikimate + NADPH + H(+). Its pathway is metabolic intermediate biosynthesis; chorismate biosynthesis; chorismate from D-erythrose 4-phosphate and phosphoenolpyruvate: step 4/7. Functionally, involved in the biosynthesis of the chorismate, which leads to the biosynthesis of aromatic amino acids. Catalyzes the reversible NADPH linked reduction of 3-dehydroshikimate (DHSA) to yield shikimate (SA). This Streptococcus sanguinis (strain SK36) protein is Shikimate dehydrogenase (NADP(+)).